A 432-amino-acid polypeptide reads, in one-letter code: Probable protein phosphatase 2C 33 (432 aa).

Residues 27–298 (GGGSERPLVR…DDTTCVVVDI (272 aa)) enclose the PPM-type phosphatase domain. Mn(2+) contacts are provided by Asp-74, Gly-75, Asp-250, and Asp-289.

Belongs to the PP2C family. Requires Mg(2+) as cofactor. Mn(2+) serves as cofactor.

The enzyme catalyses O-phospho-L-seryl-[protein] + H2O = L-seryl-[protein] + phosphate. It carries out the reaction O-phospho-L-threonyl-[protein] + H2O = L-threonyl-[protein] + phosphate. This chain is Probable protein phosphatase 2C 33, found in Oryza sativa subsp. japonica (Rice).